Reading from the N-terminus, the 343-residue chain is MDNGSCCLIEGEPISQVMPPLLILVFVLGALGNGIALCGFCFHMKTWKSSTIYLFNLAVADFLLMICLPLRTDYYLRRRHWIFGDIACRLVLFKLAMNRAGSIVFLTVVAVDRYFKVVHPHHMVNAISNRTAAATACVLWTLVILGTVYLLMESHLCVQGTLSSCESFIMESANGWHDVMFQLEFFLPLTIILFCSVNVVWSLRRRQQLTRQARMRRATRFIMVVASVFITCYLPSVLARLYFLWTVPTSACDPSVHTALHVTLSFTYLNSMLDPLVYYFSSPSLPKFYTKLTICSLKPKRPGRTKTRRSEEMPISNLCSKSSIDGANRSQRPSDGQWDLQVC.

Residues Met-1–Leu-21 lie on the Extracellular side of the membrane. N-linked (GlcNAc...) asparagine glycosylation occurs at Asn-3. The chain crosses the membrane as a helical span at residues Leu-22–Phe-42. Topologically, residues His-43–Ser-49 are cytoplasmic. Residues Ser-50–Leu-70 traverse the membrane as a helical segment. Residues Arg-71 to Leu-90 lie on the Extracellular side of the membrane. Cys-88 and Cys-165 are disulfide-bonded. A helical membrane pass occupies residues Val-91–Val-111. The Cytoplasmic segment spans residues Asp-112–Thr-131. Residues Ala-132–Met-152 form a helical membrane-spanning segment. The Extracellular portion of the chain corresponds to Glu-153–Gln-182. The helical transmembrane segment at Leu-183–Leu-203 threads the bilayer. Residues Arg-204–Arg-220 are Cytoplasmic-facing. Residues Phe-221–Leu-241 form a helical membrane-spanning segment. Over Tyr-242–Ala-259 the chain is Extracellular. A helical transmembrane segment spans residues Leu-260–Phe-280. Topologically, residues Ser-281–Cys-343 are cytoplasmic. The span at Cys-319–Ser-334 shows a compositional bias: polar residues. The interval Cys-319–Cys-343 is disordered.

It belongs to the G-protein coupled receptor 1 family. Highly expressed in subcutaneous fat and omental fat and detectable in lower levels in brain and many other tissues. High levels detected in epididymal and subcutaneous fat with slightly lower in omental fat, low levels are detected in the brain, skeletal muscle, kidney, liver and the pancreas (at protein level).

The protein resides in the cell membrane. In terms of biological role, acts as a receptor for L-lactate and mediates its anti-lipolytic effect through a G(i)-protein-mediated pathway. In Mus musculus (Mouse), this protein is Hydroxycarboxylic acid receptor 1 (Hcar1).